The following is a 425-amino-acid chain: Tumor necrosis factor receptor superfamily member 16 (425 aa).

A signal peptide spans 1–29; the sequence is MRRAGAACSAMDRLRLLLLLILGVSSGGA. Residues 30–253 are Extracellular-facing; that stretch reads KETCSTGLYT…VTRGTTDNLI (224 aa). TNFR-Cys repeat units follow at residues 32–65, 67–108, 109–147, and 149–189; these read TCST…QTVC, PCLD…DAVC, RCAY…NTVC, and ECPE…DAEC. Disulfide bonds link Cys-33-Cys-44, Cys-45-Cys-58, Cys-48-Cys-65, Cys-68-Cys-84, Cys-87-Cys-100, Cys-90-Cys-108, Cys-110-Cys-123, Cys-126-Cys-139, Cys-129-Cys-147, Cys-150-Cys-165, Cys-168-Cys-181, and Cys-171-Cys-189. Residues Asn-61 and Asn-71 are each glycosylated (N-linked (GlcNAc...) asparagine). The segment at 193–225 is disordered; it reads PGRWIPRSTPPEGSDSTAPSTQEPEVPPEQDLV. Over residues 206-215 the composition is skewed to polar residues; that stretch reads SDSTAPSTQE. A helical membrane pass occupies residues 254-274; the sequence is PVYCSILAAVVVGLVAYIAFK. Over 275-425 the chain is Cytoplasmic; it reads RWNSCKQNKQ…CSESTATSPV (151 aa). 2 stretches are compositionally biased toward polar residues: residues 282–292 and 306–327; these read NKQGANSRPVN and SGIS…TASG. The tract at residues 282–332 is disordered; sequence NKQGANSRPVNQTPPPEGEKLHSDSGISVDSQSLHDQQTHTQTASGQALKG. Ser-312 is modified (phosphoserine). The interval 327-342 is mediates interaction with KIDINS220; that stretch reads GQALKGDGNLYSSLPL. The Death domain maps to 354 to 419; it reads GDTWRHLAGE…DIVESLCSES (66 aa).

Homodimer; disulfide-linked. Heterodimer with SORCS2. The extracellular domains of the heterodimer bind NGF. The cytoplasmic region of the heterodimer binds TRIO. NGF binding mediates dissociation of TRIO from the receptor complex. Interacts with RTN4R. Interacts with TRAF2, TRAF4 and TRAF6. Interacts with PTPN13 and RANBP9. Interacts through TRAF6 with SQSTM1 which bridges NGFR to NTRK1. Interacts with BEX1. Interacts with BEX3. Interacts with KIDINS220 and NTRK1. Can form a ternary complex with NTRK1 and KIDINS220 and this complex is affected by the expression levels of KIDINS220. An increase in KIDINS220 expression leads to a decreased association of NGFR and NTRK1. Interacts (via death domain) with RAB31. Interacts with NTRK2; may regulate the ligand specificity of the NTRK2 receptor. Interacts with LINGO1. Interacts with NRADD. Interacts with MAGED1; the interaction antagonizes the association NGFR:NTRK1. Interacts (via death domain) with ARHGDIA and RIPK2. Interacts with BFAR. Subject to intramembrane proteolytic cleavage by the gamma-secretase complex, giving rise to an intracellular fragment that is rapidly degraded via the proteasome. In terms of processing, N- and O-glycosylated. Post-translationally, phosphorylated on serine residues.

The protein resides in the cell membrane. It localises to the cytoplasm. Its subcellular location is the perikaryon. The protein localises to the cell projection. It is found in the growth cone. The protein resides in the dendritic spine. In terms of biological role, low affinity receptor which can bind to NGF, BDNF, NTF3, and NTF4. Forms a heterodimeric receptor with SORCS2 that binds the precursor forms of NGF, BDNF and NTF3 with high affinity, and has much lower affinity for mature NGF and BDNF. In response to proNGF binding, the heterodimeric receptor with SORCS2 activates a signaling cascade that leads to decreased Rac activity, reorganization of the actin cytoskeleton and neuronal growth cone collapse. Plays an important role in differentiation and survival of specific neuronal populations during development. Can mediate cell survival as well as cell death of neural cells. Plays a role in the inactivation of RHOA. Plays a role in the regulation of the translocation of GLUT4 to the cell surface in adipocytes and skeletal muscle cells in response to insulin, probably by regulating RAB31 activity, and thereby contributes to the regulation of insulin-dependent glucose uptake. Necessary for the circadian oscillation of the clock genes BMAL1, PER1, PER2 and NR1D1 in the suprachiasmatic nucleus (SCN) of the brain and in liver and of the genes involved in glucose and lipid metabolism in the liver. This chain is Tumor necrosis factor receptor superfamily member 16 (Ngfr), found in Rattus norvegicus (Rat).